Reading from the N-terminus, the 206-residue chain is Ribosomal RNA small subunit methyltransferase G (206 aa).

Residues Gly71, Phe76, 122–123 (AE), and Arg135 contribute to the S-adenosyl-L-methionine site.

This sequence belongs to the methyltransferase superfamily. RNA methyltransferase RsmG family.

It localises to the cytoplasm. In terms of biological role, specifically methylates the N7 position of a guanine in 16S rRNA. This chain is Ribosomal RNA small subunit methyltransferase G, found in Bacteroides thetaiotaomicron (strain ATCC 29148 / DSM 2079 / JCM 5827 / CCUG 10774 / NCTC 10582 / VPI-5482 / E50).